The chain runs to 379 residues: Queuine tRNA-ribosyltransferase (379 aa).

Catalysis depends on aspartate 93, which acts as the Proton acceptor. Residues 93–97 (DSGGF), aspartate 147, glutamine 191, and glycine 218 contribute to the substrate site. Residues 249 to 255 (GVGKPED) form an RNA binding region. Residue aspartate 268 is the Nucleophile of the active site. An RNA binding; important for wobble base 34 recognition region spans residues 273-277 (TRNAR). Zn(2+) contacts are provided by cysteine 306, cysteine 308, cysteine 311, and histidine 337.

It belongs to the queuine tRNA-ribosyltransferase family. In terms of assembly, homodimer. Within each dimer, one monomer is responsible for RNA recognition and catalysis, while the other monomer binds to the replacement base PreQ1. Requires Zn(2+) as cofactor.

It carries out the reaction 7-aminomethyl-7-carbaguanine + guanosine(34) in tRNA = 7-aminomethyl-7-carbaguanosine(34) in tRNA + guanine. It functions in the pathway tRNA modification; tRNA-queuosine biosynthesis. In terms of biological role, catalyzes the base-exchange of a guanine (G) residue with the queuine precursor 7-aminomethyl-7-deazaguanine (PreQ1) at position 34 (anticodon wobble position) in tRNAs with GU(N) anticodons (tRNA-Asp, -Asn, -His and -Tyr). Catalysis occurs through a double-displacement mechanism. The nucleophile active site attacks the C1' of nucleotide 34 to detach the guanine base from the RNA, forming a covalent enzyme-RNA intermediate. The proton acceptor active site deprotonates the incoming PreQ1, allowing a nucleophilic attack on the C1' of the ribose to form the product. After dissociation, two additional enzymatic reactions on the tRNA convert PreQ1 to queuine (Q), resulting in the hypermodified nucleoside queuosine (7-(((4,5-cis-dihydroxy-2-cyclopenten-1-yl)amino)methyl)-7-deazaguanosine). The sequence is that of Queuine tRNA-ribosyltransferase from Mannheimia succiniciproducens (strain KCTC 0769BP / MBEL55E).